Here is a 477-residue protein sequence, read N- to C-terminus: Ribulose bisphosphate carboxylase large chain (477 aa).

Residues 1-2 constitute a propeptide that is removed on maturation; it reads MS. Proline 3 bears the N-acetylproline mark. Position 14 is an N6,N6,N6-trimethyllysine (lysine 14). 2 residues coordinate substrate: asparagine 123 and threonine 173. The active-site Proton acceptor is the lysine 175. Residue lysine 177 coordinates substrate. The Mg(2+) site is built by lysine 201, aspartate 203, and glutamate 204. At lysine 201 the chain carries N6-carboxylysine. The active-site Proton acceptor is histidine 294. Residues arginine 295, histidine 327, and serine 379 each contribute to the substrate site.

This sequence belongs to the RuBisCO large chain family. Type I subfamily. In terms of assembly, heterohexadecamer of 8 large chains and 8 small chains; disulfide-linked. The disulfide link is formed within the large subunit homodimers. Mg(2+) serves as cofactor. Post-translationally, the disulfide bond which can form in the large chain dimeric partners within the hexadecamer appears to be associated with oxidative stress and protein turnover.

The protein resides in the plastid. It is found in the chloroplast. The enzyme catalyses 2 (2R)-3-phosphoglycerate + 2 H(+) = D-ribulose 1,5-bisphosphate + CO2 + H2O. It carries out the reaction D-ribulose 1,5-bisphosphate + O2 = 2-phosphoglycolate + (2R)-3-phosphoglycerate + 2 H(+). In terms of biological role, ruBisCO catalyzes two reactions: the carboxylation of D-ribulose 1,5-bisphosphate, the primary event in carbon dioxide fixation, as well as the oxidative fragmentation of the pentose substrate in the photorespiration process. Both reactions occur simultaneously and in competition at the same active site. This Oryza nivara (Indian wild rice) protein is Ribulose bisphosphate carboxylase large chain.